The sequence spans 392 residues: 1-deoxy-D-xylulose 5-phosphate reductoisomerase (392 aa).

NADPH contacts are provided by threonine 10, glycine 11, serine 12, isoleucine 13, and asparagine 124. Lysine 125 serves as a coordination point for 1-deoxy-D-xylulose 5-phosphate. Residue glutamate 126 participates in NADPH binding. Residue aspartate 150 coordinates Mn(2+). The 1-deoxy-D-xylulose 5-phosphate site is built by serine 151, glutamate 152, serine 180, and histidine 203. Residue glutamate 152 coordinates Mn(2+). Glycine 209 serves as a coordination point for NADPH. 1-deoxy-D-xylulose 5-phosphate is bound by residues serine 216, asparagine 221, lysine 222, and glutamate 225. Position 225 (glutamate 225) interacts with Mn(2+).

Belongs to the DXR family. Mg(2+) serves as cofactor. The cofactor is Mn(2+).

The enzyme catalyses 2-C-methyl-D-erythritol 4-phosphate + NADP(+) = 1-deoxy-D-xylulose 5-phosphate + NADPH + H(+). The protein operates within isoprenoid biosynthesis; isopentenyl diphosphate biosynthesis via DXP pathway; isopentenyl diphosphate from 1-deoxy-D-xylulose 5-phosphate: step 1/6. Its function is as follows. Catalyzes the NADPH-dependent rearrangement and reduction of 1-deoxy-D-xylulose-5-phosphate (DXP) to 2-C-methyl-D-erythritol 4-phosphate (MEP). This is 1-deoxy-D-xylulose 5-phosphate reductoisomerase from Saccharophagus degradans (strain 2-40 / ATCC 43961 / DSM 17024).